A 349-amino-acid chain; its full sequence is Small ribosomal subunit protein uS2 (349 aa).

Positions 302-334 (QNNYDPSKRGYNPKYVNHKSTFNKFNNKKPVDS) are disordered.

Belongs to the universal ribosomal protein uS2 family.

The chain is Small ribosomal subunit protein uS2 from Ureaplasma parvum serovar 3 (strain ATCC 27815 / 27 / NCTC 11736).